We begin with the raw amino-acid sequence, 371 residues long: MNHLGVFETRFRPRTRHKSQRAQLIPEQITMRTAVLLPLLALLAVAQAVSFADVVMEEWHTFKLEHRKNYQDETEERFRLKIFNENKHKIAKHNQRFAEGKVSFKLAVNKYADLLHHEFRQLMNGFNYTLHKQLRAADESFKGVTFISPAHVTLPKSVDWRTKGAVTAVKDQGHCGSCWAFSSTGALEGQHFRKSGVLVSLSEQNLVDCSTKYGNNGCNGGLMDNAFRYIKDNGGIDTEKSYPYEAIDDSCHFNKGTVGATDRGFTDIPQGDEKKMAEAVATVGPVSVAIDASHESFQFYSEGVYNEPQCDAQNLDHGVLVVGFGTDESGEDYWLVKNSWGTTWGDKGFIKMLRNKENQCGIASASSYPLV.

The N-terminal stretch at Met-1–Ala-48 is a signal peptide. Positions Val-49–Thr-153 are cleaved as a propeptide — activation peptide. Asn-127 is a glycosylation site (N-linked (GlcNAc...) asparagine). 3 disulfide bridges follow: Cys-175–Cys-218, Cys-209–Cys-251, and Cys-310–Cys-360. The active site involves Cys-178. His-317 is an active-site residue. A propeptide spanning residues Asp-327 to Ser-329 is cleaved from the precursor. Asn-338 is an active-site residue.

This sequence belongs to the peptidase C1 family. In terms of assembly, dimer of a heavy and a light chain linked by disulfide bonds. In terms of tissue distribution, in the embryo, predominantly expressed in the midgut. Also expressed in larval alimentary organs such as salivary gland and midgut including gastric caeca.

Its subcellular location is the lysosome. The catalysed reaction is Specificity close to that of papain. As compared to cathepsin B, cathepsin L exhibits higher activity toward protein substrates, but has little activity on Z-Arg-Arg-NHMec, and no peptidyl-dipeptidase activity.. In terms of biological role, important for the overall degradation of proteins in lysosomes. Essential for adult male and female fertility. May play a role in digestion. The polypeptide is Cathepsin L1 (Drosophila melanogaster (Fruit fly)).